Reading from the N-terminus, the 542-residue chain is MKFSILSLAVAGLVGLAKASVSPVHVDGRYFFYENGTRFFLKGIAYQPNVDDSDTEGTLFVDPLSDGDACSRDVPYFQELSVNAIRVYAVNASLDHSACMQAFQDAGIYVLSDLAQPYEAISSSDPTWTVDLFSRYTEVVDSLAPYDNMLGFIAGNEVIQNNTNTNAAAFVKAAVRDVKSYIKSSGYRQIPVGYSTNDEEVTRDPMAYYFDCGDDDDHVDFYGINIYEWCGDSDFVSSGYQERTEEFSNMTVPMIFSEFGCIEVRPRTFSEIVALFSDNMTDVWSGGIAYQYFESENEYGVVTVSGDSVSTLTDFPYLSSRYASVIPSASYESTMSATLTATMSCQATNSAWMAATSLPPTPSEAVCECMDSTRSCVINDDVSSDDYSDLFSYVCNEISCDGITANGTYPGQYGSYSYCDAKQQLDYVLDAYYSAKGDCDFSGSATLVSASSATGTCASYLSAAGSSATNAISLTADSNAVSRNSSASTMSTSYTSGSGSSNSSGSSSNSSSKSSSGASSYNLNMVITFLSVVIGGTAVLFI.

Residues 1 to 19 form the signal peptide; that stretch reads MKFSILSLAVAGLVGLAKA. Residue Asn-35 is glycosylated (N-linked (GlcNAc...) asparagine). Cys-70 and Cys-99 are joined by a disulfide. Tyr-88 is a (1,3-beta-D-glucosyl)n binding site. N-linked (GlcNAc...) asparagine glycosylation is present at Asn-91. 2 residues coordinate (1,3-beta-D-glucosyl)n: Asn-156 and Glu-157. Glu-157 serves as the catalytic Proton donor. N-linked (GlcNAc...) asparagine glycosylation is present at Asn-161. Positions 198 and 203 each coordinate (1,3-beta-D-glucosyl)n. 5 cysteine pairs are disulfide-bonded: Cys-212–Cys-345, Cys-230–Cys-261, Cys-367–Cys-419, Cys-376–Cys-439, and Cys-395–Cys-400. Asn-249 carries an N-linked (GlcNAc...) asparagine glycan. Glu-258 functions as the Nucleophile in the catalytic mechanism. Residue Asn-279 is glycosylated (N-linked (GlcNAc...) asparagine). Tyr-290 contacts (1,3-beta-D-glucosyl)n. Asn-406, Asn-484, Asn-502, and Asn-509 each carry an N-linked (GlcNAc...) asparagine glycan. The tract at residues 490–515 is disordered; it reads MSTSYTSGSGSSNSSGSSSNSSSKSS. Residue Ser-516 is the site of GPI-anchor amidated serine attachment. A propeptide spans 517–542 (removed in mature form); the sequence is GASSYNLNMVITFLSVVIGGTAVLFI.

The protein belongs to the glycosyl hydrolase 72 family. In terms of processing, the GPI-anchor is attached to the protein in the endoplasmic reticulum and serves to target the protein to the cell surface. There, the glucosamine-inositol phospholipid moiety is cleaved off and the GPI-modified mannoprotein is covalently attached via its lipidless GPI glycan remnant to the 1,6-beta-glucan of the outer cell wall layer.

It localises to the secreted. It is found in the cell wall. The protein resides in the membrane. Functionally, splits internally a 1,3-beta-glucan molecule and transfers the newly generated reducing end (the donor) to the non-reducing end of another 1,3-beta-glucan molecule (the acceptor) forming a 1,3-beta linkage, resulting in the elongation of 1,3-beta-glucan chains in the cell wall. The sequence is that of 1,3-beta-glucanosyltransferase gas1 (gas1) from Schizosaccharomyces pombe (strain 972 / ATCC 24843) (Fission yeast).